The sequence spans 388 residues: Succinate--CoA ligase [ADP-forming] subunit beta (388 aa).

An ATP-grasp domain is found at 9-244 (KSLFAEYGLP…PSQDDAREAH (236 aa)). ATP is bound by residues Lys46, 53 to 55 (GRG), Glu99, Thr102, and Glu107. Residues Asn199 and Asp213 each contribute to the Mg(2+) site. Residues Asn264 and 321 to 323 (GIV) each bind substrate.

Belongs to the succinate/malate CoA ligase beta subunit family. In terms of assembly, heterotetramer of two alpha and two beta subunits. Mg(2+) is required as a cofactor.

The catalysed reaction is succinate + ATP + CoA = succinyl-CoA + ADP + phosphate. It catalyses the reaction GTP + succinate + CoA = succinyl-CoA + GDP + phosphate. It participates in carbohydrate metabolism; tricarboxylic acid cycle; succinate from succinyl-CoA (ligase route): step 1/1. Functionally, succinyl-CoA synthetase functions in the citric acid cycle (TCA), coupling the hydrolysis of succinyl-CoA to the synthesis of either ATP or GTP and thus represents the only step of substrate-level phosphorylation in the TCA. The beta subunit provides nucleotide specificity of the enzyme and binds the substrate succinate, while the binding sites for coenzyme A and phosphate are found in the alpha subunit. The chain is Succinate--CoA ligase [ADP-forming] subunit beta from Shewanella denitrificans (strain OS217 / ATCC BAA-1090 / DSM 15013).